The following is a 314-amino-acid chain: Phosphoribosylaminoimidazole-succinocarboxamide synthase (314 aa).

This sequence belongs to the SAICAR synthetase family.

It catalyses the reaction 5-amino-1-(5-phospho-D-ribosyl)imidazole-4-carboxylate + L-aspartate + ATP = (2S)-2-[5-amino-1-(5-phospho-beta-D-ribosyl)imidazole-4-carboxamido]succinate + ADP + phosphate + 2 H(+). Its pathway is purine metabolism; IMP biosynthesis via de novo pathway; 5-amino-1-(5-phospho-D-ribosyl)imidazole-4-carboxamide from 5-amino-1-(5-phospho-D-ribosyl)imidazole-4-carboxylate: step 1/2. The polypeptide is Phosphoribosylaminoimidazole-succinocarboxamide synthase (Bacteroides thetaiotaomicron (strain ATCC 29148 / DSM 2079 / JCM 5827 / CCUG 10774 / NCTC 10582 / VPI-5482 / E50)).